An 800-amino-acid polypeptide reads, in one-letter code: DNA topoisomerase 4 subunit A (800 aa).

Positions 31-496 (LPDVRDGLKP…ISEIKIDKEV (466 aa)) constitute a Topo IIA-type catalytic domain. The active-site O-(5'-phospho-DNA)-tyrosine intermediate is the Y119.

Belongs to the type II topoisomerase GyrA/ParC subunit family. ParC type 2 subfamily. In terms of assembly, heterotetramer composed of ParC and ParE.

It localises to the cell membrane. The catalysed reaction is ATP-dependent breakage, passage and rejoining of double-stranded DNA.. Topoisomerase IV is essential for chromosome segregation. It relaxes supercoiled DNA. Performs the decatenation events required during the replication of a circular DNA molecule. The polypeptide is DNA topoisomerase 4 subunit A (Staphylococcus epidermidis (strain ATCC 12228 / FDA PCI 1200)).